The chain runs to 259 residues: Thiazole synthase (259 aa).

Lys-99 (schiff-base intermediate with DXP) is an active-site residue. 1-deoxy-D-xylulose 5-phosphate is bound by residues Gly-160, 187 to 188 (AG), and 209 to 210 (NT).

Belongs to the ThiG family. As to quaternary structure, homotetramer. Forms heterodimers with either ThiH or ThiS.

Its subcellular location is the cytoplasm. It carries out the reaction [ThiS sulfur-carrier protein]-C-terminal-Gly-aminoethanethioate + 2-iminoacetate + 1-deoxy-D-xylulose 5-phosphate = [ThiS sulfur-carrier protein]-C-terminal Gly-Gly + 2-[(2R,5Z)-2-carboxy-4-methylthiazol-5(2H)-ylidene]ethyl phosphate + 2 H2O + H(+). It functions in the pathway cofactor biosynthesis; thiamine diphosphate biosynthesis. Catalyzes the rearrangement of 1-deoxy-D-xylulose 5-phosphate (DXP) to produce the thiazole phosphate moiety of thiamine. Sulfur is provided by the thiocarboxylate moiety of the carrier protein ThiS. In vitro, sulfur can be provided by H(2)S. This chain is Thiazole synthase, found in Solibacter usitatus (strain Ellin6076).